A 301-amino-acid chain; its full sequence is Cilia- and flagella-associated protein 161 (301 aa).

It localises to the cytoplasm. Its subcellular location is the cytoskeleton. It is found in the cilium axoneme. In terms of biological role, microtubule inner protein (MIP) part of the dynein-decorated doublet microtubules (DMTs) in cilia axoneme, which is required for motile cilia beating. The polypeptide is Cilia- and flagella-associated protein 161 (Danio rerio (Zebrafish)).